A 581-amino-acid chain; its full sequence is Ezrin (581 aa).

The FERM domain occupies 2 to 295 (PKPINVRVTT…GNHELYMRRR (294 aa)). Lys60 bears the N6-acetyllysine mark. Residues 115–120 (IYCPPE) carry the [IL]-x-C-x-x-[DE] motif motif. Tyr146 carries the phosphotyrosine; by PDGFR modification. The segment at 244–581 (EIRNISFNDK…KQRIDEFEAM (338 aa)) is interaction with SCYL3. A coiled-coil region spans residues 302-462 (VQQMKAQARE…QDDLVKTREE (161 aa)). A disordered region spans residues 306–341 (KAQAREEKHQKQLERQQLETEKKRRETVEREKEQMM). The span at 308–341 (QAREEKHQKQLERQQLETEKKRRETVEREKEQMM) shows a compositional bias: basic and acidic residues. A Phosphotyrosine; by PDGFR modification is found at Tyr354. Phosphoserine is present on Ser366. Tyr476 carries the phosphotyrosine modification. The interval 534-560 (SQARDENKRTHNDIIHNENMRQGRDKY) is disordered. The span at 535–560 (QARDENKRTHNDIIHNENMRQGRDKY) shows a compositional bias: basic and acidic residues. Phosphothreonine; by ROCK2 and PKC/PRKCI is present on Thr562.

Interacts with PALS1 and NHERF2. Found in a complex with EZR, PODXL and NHERF2. Interacts with MCC, PLEKHG6, PODXL, SCYL3/PACE1, NHERF1 and TMEM8B. Interacts (when phosphorylated) with FES/FPS. Interacts with dimeric S100P, the interaction may be activating through unmasking of F-actin binding sites. Identified in complexes that contain VIM, EZR, AHNAK, BFSP1, BFSP2, ANK2, PLEC, PRX and spectrin. Detected in a complex composed of at least EZR, AHNAK, PPL and PRX. Interacts with PDPN (via cytoplasmic domain); activates RHOA and promotes epithelial-mesenchymal transition. Interacts with SPN/CD43 cytoplasmic tail, CD44 and ICAM2. Interacts with SLC9A3; interaction targets SLC9A3 to the apical membrane. Interacts with SLC9A1; regulates interactions of SLC9A1 with cytoskeletal and promotes stress fiber formation. Interacts with CLIC5; may work together in a complex which also includes RDX and MYO6 to stabilize linkages between the plasma membrane and subjacent actin cytoskeleton at the base of stereocilia. Post-translationally, phosphorylated by tyrosine-protein kinases. Phosphorylation by ROCK2 suppresses the head-to-tail association of the N-terminal and C-terminal halves resulting in an opened conformation which is capable of actin and membrane-binding. In terms of processing, S-nitrosylation is induced by interferon-gamma and oxidatively-modified low-densitity lipoprotein (LDL(ox)) possibly implicating the iNOS-S100A8/9 transnitrosylase complex. As to expression, detected in eye lens fiber cells (at protein level).

It localises to the apical cell membrane. It is found in the cell projection. The protein resides in the microvillus membrane. The protein localises to the ruffle membrane. Its subcellular location is the cytoplasm. It localises to the cell cortex. It is found in the cytoskeleton. The protein resides in the microvillus. Its activity is regulated as follows. A head-to-tail association, of the N-terminal and C-terminal halves results in a closed conformation (inactive form) which is incapable of actin or membrane-binding. Functionally, probably involved in connections of major cytoskeletal structures to the plasma membrane. In epithelial cells, required for the formation of microvilli and membrane ruffles on the apical pole. Along with PLEKHG6, required for normal macropinocytosis. This chain is Ezrin (EZR), found in Bos taurus (Bovine).